The following is a 216-amino-acid chain: Holliday junction branch migration complex subunit RuvA (216 aa).

Residues 1 to 64 (MISFIKGVLI…EDAQQLYGFK (64 aa)) are domain I. The tract at residues 65–143 (SKVDKKVFQE…KMANEIYAQT (79 aa)) is domain II. The tract at residues 144–163 (SGTTTTSQDSQAQQAPTSAV) is flexible linker. Positions 164–216 (LANSIFNESVDALLALGYKQKDAEKMSRSAMGDATTAAEVIRKALQGSIRSKR) are domain III.

It belongs to the RuvA family. In terms of assembly, homotetramer. Forms an RuvA(8)-RuvB(12)-Holliday junction (HJ) complex. HJ DNA is sandwiched between 2 RuvA tetramers; dsDNA enters through RuvA and exits via RuvB. An RuvB hexamer assembles on each DNA strand where it exits the tetramer. Each RuvB hexamer is contacted by two RuvA subunits (via domain III) on 2 adjacent RuvB subunits; this complex drives branch migration. In the full resolvosome a probable DNA-RuvA(4)-RuvB(12)-RuvC(2) complex forms which resolves the HJ.

It localises to the cytoplasm. Functionally, the RuvA-RuvB-RuvC complex processes Holliday junction (HJ) DNA during genetic recombination and DNA repair, while the RuvA-RuvB complex plays an important role in the rescue of blocked DNA replication forks via replication fork reversal (RFR). RuvA specifically binds to HJ cruciform DNA, conferring on it an open structure. The RuvB hexamer acts as an ATP-dependent pump, pulling dsDNA into and through the RuvAB complex. HJ branch migration allows RuvC to scan DNA until it finds its consensus sequence, where it cleaves and resolves the cruciform DNA. This chain is Holliday junction branch migration complex subunit RuvA, found in Francisella tularensis subsp. novicida (strain U112).